The primary structure comprises 1451 residues: Fanconi anemia group D2 protein (1451 aa).

The disordered stretch occupies residues 1-37 (MVSKRRLSKSEDKESLTEDASKTRKQPLSKKTKKSHI). An interaction with FANCE region spans residues 1–291 (MVSKRRLSKS…IKFILHSVTA (291 aa)). Residue serine 8 is modified to Phosphoserine. Residues 8-22 (SKSEDKESLTEDASK) show a composition bias toward basic and acidic residues. Residues 23–36 (TRKQPLSKKTKKSH) show a composition bias toward basic residues. At serine 222 the chain carries Phosphoserine; by ATM. An interaction with BRCA2 region spans residues 248–359 (VLSSLRLDPN…IKSAIRYEKT (112 aa)). Lysine 561 is covalently cross-linked (Glycyl lysine isopeptide (Lys-Gly) (interchain with G-Cter in ubiquitin)). 3 positions are modified to phosphoserine: serine 592, serine 594, and serine 717. The tract at residues 868–906 (IERKQKTDGSKTSSSDTLSEEKNSECDPTPSHRGQLNKE) is disordered. Serine 1257 carries the phosphoserine modification. A disordered region spans residues 1396–1451 (GEEIKSQNSQESTADESEDDMSSQASKSKATEDGEEDEVSAGEKEQDSDESYDDSD). Phosphoserine; by ATM occurs at positions 1401 and 1404. Phosphoserine occurs at positions 1412 and 1423. Threonine 1426 carries the post-translational modification Phosphothreonine. A compositionally biased stretch (acidic residues) spans 1428–1451 (DGEEDEVSAGEKEQDSDESYDDSD). Serine 1435 carries the post-translational modification Phosphoserine.

It belongs to the Fanconi anemia protein FANCD2 family. Homodimer; cannot be ubiquitinated and does not bind DNA. Part of a FANCI-FANCD2 heterodimeric complex that binds and scans dsDNA for DNA damage. Interacts directly with FANCE and FANCI. Interacts with USP1 and MEN1. The ubiquitinated form specifically interacts with BRCA1 and BLM. Both the nonubiquitinated and the monoubiquitinated forms interact with BRCA2; this interaction is mediated by phosphorylated FANCG and the complex also includes XCCR3. The ubiquitinated form specifically interacts with MTMR15/FAN1 (via UBZ-type zinc finger), leading to recruit MTMR15/FAN1 to sites of DNA damage. Interacts with DCLRE1B/Apollo. Interacts with POLN. Interacts with UHRF1 and UHRF2; these interactions promote FANCD2 activation. In terms of processing, monoubiquitinated on Lys-561 during S phase and upon genotoxic stress by FANCL in complex with E2 ligases UBE2T or UBE2W (isoform 1 and isoform 2). Deubiquitinated by USP1 as cells enter G2/M, or once DNA repair is completed. Monoubiquitination requires the joint intervention of the FANC core complex, including FANCA, FANCB, FANCC, FANCE, FANCF, FANCG, and FANCM, and proteins involved in cell cycle checkpoints and DNA repair, including RPA1, ATR, CHEK1 and BRCA1, and is mediated by FANCL/PHF9. Monoubiquitination prevents DNA release from the FANCI-FANCD2 complex. FANCD2 is only ubiquitinated in the FANCI-FANCD2 complex and the monoubiquitination of FANCD2 is promoted by phosphorylation of FANCI. Ubiquitination is required for binding to chromatin, interaction with BRCA1, BRCA2 and MTMR15/FAN1, DNA repair, and normal cell cycle progression, but not for phosphorylation on Ser-222 or interaction with MEN1. Post-translationally, phosphorylated in response to various genotoxic stresses by ATM and/or ATR. Upon ionizing radiation, phosphorylated by ATM on Ser-222 and Ser-1404. Phosphorylation on Ser-222 is required for S-phase checkpoint activation, but not for ubiquitination, foci formation, or DNA repair. In contrast, phosphorylation by ATR on other sites may be required for ubiquitination and foci formation. Highly expressed in germinal center cells of the spleen, tonsil, and reactive lymph nodes, and in the proliferating basal layer of squamous epithelium of tonsil, esophagus, oropharynx, larynx and cervix. Expressed in cytotrophoblastic cells of the placenta and exocrine cells of the pancreas (at protein level). Highly expressed in testis, where expression is restricted to maturing spermatocytes.

It localises to the nucleus. Required for maintenance of chromosomal stability. Promotes accurate and efficient pairing of homologs during meiosis. Involved in the repair of DNA double-strand breaks, both by homologous recombination and single-strand annealing. The FANCI-FANCD2 complex binds and scans double-stranded DNA (dsDNA) for DNA damage; this complex stalls at DNA junctions between double-stranded DNA and single-stranded DNA. May participate in S phase and G2 phase checkpoint activation upon DNA damage. Plays a role in preventing breakage and loss of missegregating chromatin at the end of cell division, particularly after replication stress. Required for the targeting, or stabilization, of BLM to non-centromeric abnormal structures induced by replicative stress. Promotes BRCA2/FANCD1 loading onto damaged chromatin. May also be involved in B-cell immunoglobulin isotype switching. This is Fanconi anemia group D2 protein (FANCD2) from Homo sapiens (Human).